The sequence spans 921 residues: MRSSFRLKPICFYLMGVTLYHYSYAEDAGRAGSEAQIQVLEDVHVKAKRVPKDKKVFTDARAVSTRQDIFKSSENLDNIVRSIPGAFTQQDKSSGIVSLNIRGDSGFGRVNTMVDGITQTFYSTSTDAGRAGGSSQFGASVDSNFIAGLDVVKGSFSGSAGINSLAGSANLRTLGVDDVVQGNNTYGLLLKGLTGTNSTKGNAMAAIGARKWLESGASVGVLYGHSRRSVAQNYRVGGGGQHIGNFGAEYLERRKQRYFVQEGALKFNSDSGKWERDLQRQQWKYKPYKNYNNQELQKYIEEHDKSWRENLAPQYDITPIDPSSLKQQSAGNLFKLEYDGVFNKYTAQFRDLNTKIGSRKIINRNYQFNYGLSLNPYTNLNLTAAYNSGRQKYPKGSKFTGWGLLKDFETYNNAKILDLNNTATFRLPRETELQTTLGFNYFHNEYGKNRFPEELGLFFDGPDQDNGLYSYLGRFKGDKGLLPQKSTIVQPAGSQYFNTFYFDAALKKDIYRLNYSTNTVGYRFGGEYTGYYGSDDEFKRAFGENSPTYKKHCNRSCGIYEPVLKKYGKKRANNHSVSISADFGDYFMPFASYSRTHRMPNIQEMYFSQIGDSGVHTALKPERANTWQFGFNTYKKGLLKQDDTLGLKLVGYRSRIDNYIHNVYGKWWDLNGDIPSWVSSTGLAYTIQHRNFKDKVHKHGFELELNYDYGRFFTNLSYAYQKSTQPTNFSDASESPNNASKEDQLKQGYGLSRVSALPRDYGRLEVGTRWLGNKLTLGGAMRYFGKSIRATAEERYIDGTNGGNTSNFRQLGKRSIKQTETLARQPLIFDFYAAYEPKKNLIFRAEVKNLFDRRYIDPLDAGNDAATQRYYSSFDPKDKDEDVTCNADKTLCNGKYGGTSKSVLTNFARGRTFLMTMSYKF.

The first 25 residues, 1 to 25 (MRSSFRLKPICFYLMGVTLYHYSYA), serve as a signal peptide directing secretion. The TBDR plug domain occupies 53–174 (DKKVFTDARA…LAGSANLRTL (122 aa)). The 737-residue stretch at 185 to 921 (TYGLLLKGLT…TFLMTMSYKF (737 aa)) folds into the TBDR beta-barrel domain. The TonB C-terminal box motif lies at 904–921 (LTNFARGRTFLMTMSYKF).

It belongs to the TonB-dependent receptor family.

Its subcellular location is the cell outer membrane. Its function is as follows. Probable receptor, TonB-dependent. This chain is Probable TonB-dependent receptor NMB1497, found in Neisseria meningitidis serogroup B (strain ATCC BAA-335 / MC58).